Consider the following 413-residue polypeptide: MTAPTGTSATTTRPWTPRIATQLSVLACAAFIYVTAEILPVGALSAIARNLRVSVVLVGTLLSWYALVAAVTTVPLVRWTAHWPRRRALVVSLVCLTVSQLVSALAPNFAVLAAGRVLCAVTHGLLWAVIAPIATRLVPPSHAGRATTSIYIGTSLALVVGSPLTAAMSLMWGWRLAAVCVTGAAAAVALAARLALPEMVLRADQLEHVGRRARHPRNPRLVKVSVLTMIAVTGHFVSYTYIVVIIRDVVGVRGPNLAWLLAAYGVAGLVSVPLVARPLDRWPKGAVIVGMTGLTAAFTLLTALAFGERHTAATALLGTGAIVLWGALATAVSPMLQSAAMRSGGDDPDGASGLYVTAFQIGIMAGALLGGLLYERSLAMMLTASAGLMGVALFGMTVSQHLFENPTLSPGDG.

A run of 12 helical transmembrane segments spans residues 23–43 (LSVLACAAFIYVTAEILPVGA), 55–75 (VVLVGTLLSWYALVAAVTTVP), 89–109 (LVVSLVCLTVSQLVSALAPNF), 110–130 (AVLAAGRVLCAVTHGLLWAVI), 150–170 (IYIGTSLALVVGSPLTAAMSL), 176–196 (LAAVCVTGAAAAVALAARLAL), 226–246 (VLTMIAVTGHFVSYTYIVVII), 256–276 (NLAWLLAAYGVAGLVSVPLVA), 286–306 (AVIVGMTGLTAAFTLLTALAF), 312–332 (AATALLGTGAIVLWGALATAV), 353–373 (GLYVTAFQIGIMAGALLGGLL), and 378–398 (LAMMLTASAGLMGVALFGMTV).

Belongs to the major facilitator superfamily.

It localises to the cell membrane. Functionally, active efflux pump that plays an important role in chloramphenicol resistance. This Mycobacterium tuberculosis (strain CDC 1551 / Oshkosh) protein is Chloramphenicol efflux pump MT0201.